Consider the following 320-residue polypeptide: Olfactory receptor 5C1 (320 aa).

At 1 to 29 (MNSENLTRAAVAPAEFVLLGITNRWDLRV) the chain is on the extracellular side. N-linked (GlcNAc...) asparagine glycosylation occurs at asparagine 5. The helical transmembrane segment at 30 to 50 (ALFLTCLPVYLVSLLGNMGMA) threads the bilayer. The Cytoplasmic portion of the chain corresponds to 51–58 (LLIRMDAR). The chain crosses the membrane as a helical span at residues 59–79 (LHTPMYFFLANLSLLDACYSS). The Extracellular segment spans residues 80–103 (AIGPKMLVDLLLPRATIPYTACAL). Residues cysteine 101 and cysteine 193 are joined by a disulfide bond. A helical transmembrane segment spans residues 104–124 (QMFVFAGLADTECCLLAAMAY). Topologically, residues 125-143 (DRYVAIRNPLLYTTAMSQR) are cytoplasmic. A helical membrane pass occupies residues 144 to 164 (LCLALLGASGLGGAVSAFVHT). The Extracellular segment spans residues 165–200 (TLTFRLSFCRSRKINSFFCDIPPLLAISCSDTSLNE). The chain crosses the membrane as a helical span at residues 201–221 (LLLFAICGFIQTATVLAITVS). Over 222–241 (YGFIAGAVIHMRSVEGSRRA) the chain is Cytoplasmic. The chain crosses the membrane as a helical span at residues 242-262 (ASTGGSHLTAVAMMYGTLIFM). Residues 263-275 (YLRPSSSYALDTD) are Extracellular-facing. Residues 276 to 296 (KMASVFYTLVIPSLNPLIYSL) form a helical membrane-spanning segment. Residues 297 to 320 (RNKEVKEALRQTWSRFHCPGQGSQ) are Cytoplasmic-facing.

This sequence belongs to the G-protein coupled receptor 1 family.

The protein localises to the cell membrane. Odorant receptor. The polypeptide is Olfactory receptor 5C1 (OR5C1) (Homo sapiens (Human)).